Consider the following 31-residue polypeptide: SIPCGESCVFIPCTVTALLGCSCKSKVCYKN.

Positions 1–31 (SIPCGESCVFIPCTVTALLGCSCKSKVCYKN) form a cross-link, cyclopeptide (Ser-Asn). Intrachain disulfides connect cysteine 4/cysteine 21, cysteine 8/cysteine 23, and cysteine 13/cysteine 28.

The protein belongs to the cyclotide family. Bracelet subfamily. This is a cyclic peptide.

In terms of biological role, probably participates in a plant defense mechanism. Has antibiotic activity. Inhibits the cytopathic effects and replication of the human immunodeficiency virus. Active against both Gram-positive and Gram-negative bacteria. The sequence is that of Cyclopsychotride-A from Psychotria longipes.